We begin with the raw amino-acid sequence, 158 residues long: NAD(P)H-quinone oxidoreductase subunit J, chloroplastic (158 aa).

This sequence belongs to the complex I 30 kDa subunit family. In terms of assembly, NDH is composed of at least 16 different subunits, 5 of which are encoded in the nucleus.

The protein resides in the plastid. It is found in the chloroplast thylakoid membrane. It catalyses the reaction a plastoquinone + NADH + (n+1) H(+)(in) = a plastoquinol + NAD(+) + n H(+)(out). The enzyme catalyses a plastoquinone + NADPH + (n+1) H(+)(in) = a plastoquinol + NADP(+) + n H(+)(out). Its function is as follows. NDH shuttles electrons from NAD(P)H:plastoquinone, via FMN and iron-sulfur (Fe-S) centers, to quinones in the photosynthetic chain and possibly in a chloroplast respiratory chain. The immediate electron acceptor for the enzyme in this species is believed to be plastoquinone. Couples the redox reaction to proton translocation, and thus conserves the redox energy in a proton gradient. This is NAD(P)H-quinone oxidoreductase subunit J, chloroplastic from Spinacia oleracea (Spinach).